Reading from the N-terminus, the 382-residue chain is Secreted RxLR effector protein 118 (382 aa).

A signal peptide spans 1–21 (MRGAYYVTIALLVVASSQISA). The short motif at 48-65 (RSLRGSRDVSNDVAIEER) is the RxLR-dEER element. Residues 308 to 382 (MNKASTSKGK…AVTSLSSISN (75 aa)) are disordered. The segment covering 310–323 (KASTSKGKSSVFTR) has biased composition (polar residues).

This sequence belongs to the RxLR effector family.

The protein localises to the secreted. The protein resides in the host nucleus. Its function is as follows. Secreted effector that completely suppresses the host cell death induced by cell death-inducing proteins. The protein is Secreted RxLR effector protein 118 of Plasmopara viticola (Downy mildew of grapevine).